The sequence spans 182 residues: Adenine phosphoribosyltransferase (182 aa).

Belongs to the purine/pyrimidine phosphoribosyltransferase family. Homodimer.

It localises to the cytoplasm. It carries out the reaction AMP + diphosphate = 5-phospho-alpha-D-ribose 1-diphosphate + adenine. The protein operates within purine metabolism; AMP biosynthesis via salvage pathway; AMP from adenine: step 1/1. Its function is as follows. Catalyzes a salvage reaction resulting in the formation of AMP, that is energically less costly than de novo synthesis. The polypeptide is Adenine phosphoribosyltransferase (Stutzerimonas stutzeri (strain A1501) (Pseudomonas stutzeri)).